A 185-amino-acid chain; its full sequence is Small ribosomal subunit protein uS4c (185 aa).

One can recognise an S4 RNA-binding domain in the interval 72 to 134 (MRLDNVIFRL…PTSCNALKGE (63 aa)). The interval 132–154 (KGESPGGGETPDHLTASLSEGSR) is disordered.

This sequence belongs to the universal ribosomal protein uS4 family. In terms of assembly, part of the 30S ribosomal subunit. Contacts protein S5. The interaction surface between S4 and S5 is involved in control of translational fidelity.

The protein resides in the plastid. It is found in the chloroplast. Functionally, one of the primary rRNA binding proteins, it binds directly to 16S rRNA where it nucleates assembly of the body of the 30S subunit. Its function is as follows. With S5 and S12 plays an important role in translational accuracy. In Woodwardia unigemmata (Chainfern), this protein is Small ribosomal subunit protein uS4c (rps4).